The primary structure comprises 1071 residues: DNA-directed RNA polymerase subunit beta (1071 aa).

This sequence belongs to the RNA polymerase beta chain family. In plastids the minimal PEP RNA polymerase catalytic core is composed of four subunits: alpha, beta, beta', and beta''. When a (nuclear-encoded) sigma factor is associated with the core the holoenzyme is formed, which can initiate transcription.

The protein localises to the plastid. It localises to the chloroplast. It catalyses the reaction RNA(n) + a ribonucleoside 5'-triphosphate = RNA(n+1) + diphosphate. DNA-dependent RNA polymerase catalyzes the transcription of DNA into RNA using the four ribonucleoside triphosphates as substrates. The protein is DNA-directed RNA polymerase subunit beta of Drimys granadensis.